We begin with the raw amino-acid sequence, 185 residues long: Peptidyl-tRNA hydrolase (185 aa).

Y14 is a tRNA binding site. The active-site Proton acceptor is the H19. TRNA contacts are provided by Y65, N67, and N113.

It belongs to the PTH family. Monomer.

It localises to the cytoplasm. The enzyme catalyses an N-acyl-L-alpha-aminoacyl-tRNA + H2O = an N-acyl-L-amino acid + a tRNA + H(+). Its function is as follows. Hydrolyzes ribosome-free peptidyl-tRNAs (with 1 or more amino acids incorporated), which drop off the ribosome during protein synthesis, or as a result of ribosome stalling. In terms of biological role, catalyzes the release of premature peptidyl moieties from peptidyl-tRNA molecules trapped in stalled 50S ribosomal subunits, and thus maintains levels of free tRNAs and 50S ribosomes. This chain is Peptidyl-tRNA hydrolase, found in Rickettsia rickettsii (strain Iowa).